The chain runs to 1194 residues: ATP-dependent RNA helicase DHX30 (1194 aa).

Positions 1 to 10 are enriched in basic and acidic residues; sequence MFSLDSFRKD. A disordered region spans residues 1-27; that stretch reads MFSLDSFRKDRAQHRQRQCKLPPPRLP. Phosphoserine is present on residues Ser-6 and Arg-15. Residues 53-121 enclose the DRBM domain; the sequence is PKNLLNSVIG…QAAAAACQLF (69 aa). The disordered stretch occupies residues 150–199; the sequence is ADSWWRPEPTMPPTSWRQLNPESIRPGGPGGLSRSLGREEEEDEEEELEE. Residues 188–199 show a composition bias toward acidic residues; sequence EEEEDEEEELEE. A phosphoserine mark is found at Ser-226 and Ser-380. Residues 444 to 612 form the Helicase ATP-binding domain; the sequence is LNAIEQHPVV…FGGCPVIKVP (169 aa). 457 to 464 contributes to the ATP binding site; sequence GDTGCGKT. Residues 559–562 carry the DEAH box motif; that stretch reads DEVH. Positions 654–827 constitute a Helicase C-terminal domain; that stretch reads LVTDLVLHID…NLVLQAKIHM (174 aa).

The protein belongs to the DEAD box helicase family. DEAH subfamily. Identified in a complex with TFAM and SSBP1. Interacts with AGO1 and AGO2. Interacts (via N-terminus) with ZC3HAV1 (via N-terminal domain) in an RNA-independent manner. Found in a complex with GRSF1, DDX28, FASTKD2 and FASTKD5. In terms of processing, phosphorylated on Ser-15.

The protein localises to the cytoplasm. It localises to the mitochondrion. Its subcellular location is the mitochondrion matrix. It is found in the mitochondrion nucleoid. The enzyme catalyses ATP + H2O = ADP + phosphate + H(+). Functionally, RNA-dependent helicase. Plays an important role in the assembly of the mitochondrial large ribosomal subunit. Required for optimal function of the zinc-finger antiviral protein ZC3HAV1. Associates with mitochondrial DNA. Involved in nervous system development and differentiation through its involvement in the up-regulation of a number of genes which are required for neurogenesis, including GSC, NCAM1, neurogenin, and NEUROD. The sequence is that of ATP-dependent RNA helicase DHX30 (DHX30) from Homo sapiens (Human).